Here is a 421-residue protein sequence, read N- to C-terminus: Zinc finger protein 57 (421 aa).

Positions 15-88 (VSYEDVAVSF…SCTGVFKGGP (74 aa)) constitute a KRAB domain. The C2H2-type 1; degenerate zinc-finger motif lies at 90–113 (FFCLTCGKCFKKNTFLFNHQFPVR). 2 C2H2-type zinc fingers span residues 140–162 (FFCN…RRAH) and 168–190 (RSCP…LKVH). The disordered stretch occupies residues 191–221 (QNKPAASNQAGNQASNQRLKSRVPPTTPRSQ). The span at 195–207 (AASNQAGNQASNQ) shows a compositional bias: low complexity. A C2H2-type 4 zinc finger spans residues 264-286 (ISCPYCHITFTMRTCLLTHLKIH). The C2H2-type 5; degenerate zinc finger occupies 313-332 (YTCPVCDSSFRGKESLLDHL). Positions 371–421 (GKRMESRRRRRKRACTENPETEGLSGKGRVAPWEMEGATSPESPVTEEDSD) are disordered.

It belongs to the krueppel C2H2-type zinc-finger protein family. Expressed in oocytes and in a subset of adult tissues. Expressed at high levels in testis, and at low levels in cerebellum. Present in sciatic nerve and spinal cord (at protein level).

It is found in the nucleus. Transcription regulator required to maintain maternal and paternal gene imprinting, a process by which gene expression is restricted in a parent of origin-specific manner by epigenetic modification of genomic DNA and chromatin, including DNA methylation. Acts by controlling DNA methylation during the earliest multicellular stages of development at multiple imprinting control regions (ICRs). Acts together with ZNF445, but ZFP57 plays the predominant role in imprinting maintenance. In contrast, in humans, ZNF445 seems to be the major factor early embryonic imprinting maintenance. Required for the establishment of maternal methylation imprints at SNRPN locus. Acts as a transcriptional repressor in Schwann cells. Binds to a 5'-TGCCGC-3' consensus sequence and recognizes the methylated CpG within this element. The sequence is that of Zinc finger protein 57 (Zfp57) from Mus musculus (Mouse).